The primary structure comprises 688 residues: Alpha-1,4-glucan:maltose-1-phosphate maltosyltransferase (688 aa).

K289, Q349, and D384 together coordinate alpha-maltose 1-phosphate. D420 acts as the Nucleophile in catalysis. N421 is an alpha-maltose 1-phosphate binding site. Catalysis depends on E449, which acts as the Proton donor. 560–561 is an alpha-maltose 1-phosphate binding site; sequence KY.

It belongs to the glycosyl hydrolase 13 family. GlgE subfamily. In terms of assembly, homodimer.

The enzyme catalyses alpha-maltose 1-phosphate + [(1-&gt;4)-alpha-D-glucosyl](n) = [(1-&gt;4)-alpha-D-glucosyl](n+2) + phosphate. In terms of biological role, maltosyltransferase that uses maltose 1-phosphate (M1P) as the sugar donor to elongate linear or branched alpha-(1-&gt;4)-glucans. Is involved in a branched alpha-glucan biosynthetic pathway from trehalose, together with TreS, Mak and GlgB. This chain is Alpha-1,4-glucan:maltose-1-phosphate maltosyltransferase, found in Rhodospirillum rubrum (strain ATCC 11170 / ATH 1.1.1 / DSM 467 / LMG 4362 / NCIMB 8255 / S1).